Consider the following 767-residue polypeptide: DNA topoisomerase 1 (767 aa).

The segment covering 1 to 23 has biased composition (basic and acidic residues); that stretch reads MSGDHLHNDSQIEADFRLNDSHK. The disordered stretch occupies residues 1–200; that stretch reads MSGDHLHNDS…DNKKKKAKKE (200 aa). Serine 2 is subject to N-acetylserine. Serine 2 and serine 10 each carry phosphoserine. A compositionally biased stretch (basic residues) spans 24–39; that stretch reads HKDKHKDREHRHKEHK. The span at 40-110 shows a compositional bias: basic and acidic residues; the sequence is KDKDKDREKS…DAKIKKEKEN (71 aa). A Phosphoserine modification is found at serine 59. A Glycyl lysine isopeptide (Lys-Gly) (interchain with G-Cter in SUMO2) cross-link involves residue lysine 103. A Glycyl lysine isopeptide (Lys-Gly) (interchain with G-Cter in SUMO); alternate cross-link involves residue lysine 105. Lysine 105 participates in a covalent cross-link: Glycyl lysine isopeptide (Lys-Gly) (interchain with G-Cter in SUMO2); alternate. At serine 114 the chain carries Phosphoserine. A Glycyl lysine isopeptide (Lys-Gly) (interchain with G-Cter in SUMO); alternate cross-link involves residue lysine 119. Lysine 119 is covalently cross-linked (Glycyl lysine isopeptide (Lys-Gly) (interchain with G-Cter in SUMO2); alternate). Lysine 119 is covalently cross-linked (Glycyl lysine isopeptide (Lys-Gly) (interchain with G-Cter in SUMO1); alternate). Residues 131 to 168 show a composition bias toward basic and acidic residues; that stretch reads PKEDIKPLKRPRDEDDADYKPKKIKTEDIKKEKKRKLE. Residues lysine 136 and lysine 150 each participate in a glycyl lysine isopeptide (Lys-Gly) (interchain with G-Cter in SUMO2) cross-link. Lysine 155 participates in a covalent cross-link: Glycyl lysine isopeptide (Lys-Gly) (interchain with G-Cter in SUMO); alternate. A Glycyl lysine isopeptide (Lys-Gly) (interchain with G-Cter in SUMO2); alternate cross-link involves residue lysine 155. Glycyl lysine isopeptide (Lys-Gly) (interchain with G-Cter in SUMO2) cross-links involve residues lysine 160 and lysine 166. Lysine 174 is covalently cross-linked (Glycyl lysine isopeptide (Lys-Gly) (interchain with G-Cter in SUMO2); alternate). Lysine 174 bears the N6-acetyllysine; alternate mark. Positions 181–200 are enriched in basic and acidic residues; the sequence is KDKDKKVAEPDNKKKKAKKE. Lysine 206 participates in a covalent cross-link: Glycyl lysine isopeptide (Lys-Gly) (interchain with G-Cter in SUMO2). Lysine 282 is modified (N6-acetyllysine). Residue lysine 338 forms a Glycyl lysine isopeptide (Lys-Gly) (interchain with G-Cter in SUMO2) linkage. 2 interaction with DNA regions span residues 427–428 and 490–495; these read KY and RAGNEK. Positions 434-767 constitute a Topo IB-type catalytic domain; the sequence is SSRIKGEKDW…IDMTDEDYEF (334 aa). Serine 508 carries the post-translational modification Phosphoserine; by CK2. Residue lysine 551 forms a Glycyl lysine isopeptide (Lys-Gly) (interchain with G-Cter in SUMO2) linkage. Residues 587–589 form an interaction with DNA region; sequence TAK. Residues lysine 644, lysine 702, and lysine 714 each participate in a glycyl lysine isopeptide (Lys-Gly) (interchain with G-Cter in SUMO2) cross-link. The active-site O-(3'-phospho-DNA)-tyrosine intermediate is tyrosine 725.

Belongs to the type IB topoisomerase family. In terms of assembly, monomer. Interacts with ERCC6. Interacts with TPRN; TPRN interacts with a number of DNA damage response proteins, is recruited to sites of DNA damage and may play a role in DNA damage repair. Sumoylated. Lys-119 is the main site of sumoylation. Sumoylation plays a role in partitioning TOP1 between nucleoli and nucleoplasm. Levels are dramatically increased on camptothecin (CPT) treatment. Post-translationally, phosphorylation at Ser-508 by CK2 increases binding to supercoiled DNA and sensitivity to camptothecin.

The protein resides in the nucleus. It localises to the nucleolus. The protein localises to the nucleoplasm. It carries out the reaction ATP-independent breakage of single-stranded DNA, followed by passage and rejoining.. Releases the supercoiling and torsional tension of DNA introduced during the DNA replication and transcription by transiently cleaving and rejoining one strand of the DNA duplex. Introduces a single-strand break via transesterification at a target site in duplex DNA. The scissile phosphodiester is attacked by the catalytic tyrosine of the enzyme, resulting in the formation of a DNA-(3'-phosphotyrosyl)-enzyme intermediate and the expulsion of a 5'-OH DNA strand. The free DNA strand then rotates around the intact phosphodiester bond on the opposing strand, thus removing DNA supercoils. Finally, in the religation step, the DNA 5'-OH attacks the covalent intermediate to expel the active-site tyrosine and restore the DNA phosphodiester backbone. Regulates the alternative splicing of tissue factor (F3) pre-mRNA in endothelial cells. Involved in the circadian transcription of the core circadian clock component BMAL1 by altering the chromatin structure around the ROR response elements (ROREs) on the BMAL1 promoter. The protein is DNA topoisomerase 1 (Top1) of Rattus norvegicus (Rat).